A 189-amino-acid chain; its full sequence is GTPase NRas (189 aa).

Residues 10 to 18 (GAGGVGKSA) and 29 to 30 (VD) contribute to the GTP site. The short motif at 32-40 (YDPTIEDSY) is the Effector region element. 57–61 (DTAGQ) serves as a coordination point for GTP. Ser-89 carries the post-translational modification Phosphoserine. Residue 116–119 (NKCD) coordinates GTP. The interval 166–185 (YRLKKLNSSDDGTQGCMGSP) is hypervariable region. Lys-170 participates in a covalent cross-link: Glycyl lysine isopeptide (Lys-Gly) (interchain with G-Cter in ubiquitin). Cys-181 carries S-palmitoyl cysteine lipidation. Residue Cys-186 is the site of S-farnesyl cysteine attachment. Positions 187 to 189 (VLM) are cleaved as a propeptide — removed in mature form.

The protein belongs to the small GTPase superfamily. Ras family. As to quaternary structure, interacts (active GTP-bound form preferentially) with RGS14. Interacts (active GTP-bound form) with RASSF7. Interacts (active GTP-bound form) with both SHOC2 and PP1c (all isoforms) to form a tertiary complex; SHOC2 and PP1c preferably bind M-Ras/MRAS, but they also bind K-Ras/KRAS, N-Ras/NRAS and H-Ras/HRAS. Post-translationally, palmitoylated by the ZDHHC9-GOLGA7 complex. Depalmitoylated by ABHD17A, ABHD17B and ABHD17C. A continuous cycle of de- and re-palmitoylation regulates rapid exchange between plasma membrane and Golgi. In terms of processing, acetylation at Lys-104 prevents interaction with guanine nucleotide exchange factors (GEFs). Ubiquitinated by the BCR(LZTR1) E3 ubiquitin ligase complex at Lys-170 in a non-degradative manner, leading to inhibit Ras signaling by decreasing Ras association with membranes. Post-translationally, phosphorylation at Ser-89 enhances NRAS association with its downstream effectors.

It is found in the cell membrane. Its subcellular location is the golgi apparatus membrane. The enzyme catalyses GTP + H2O = GDP + phosphate + H(+). Alternates between an inactive form bound to GDP and an active form bound to GTP. Activated by a guanine nucleotide-exchange factor (GEF) and inactivated by a GTPase-activating protein (GAP). Ras proteins bind GDP/GTP and possess intrinsic GTPase activity. In Mus musculus (Mouse), this protein is GTPase NRas (Nras).